The primary structure comprises 1607 residues: Abnormal cell migration protein 38 (1607 aa).

Disordered regions lie at residues Glu-14–Phe-52, Arg-67–Val-93, Ser-167–Ala-222, Gly-326–Gln-425, Ser-459–Gln-478, Met-549–Tyr-594, Tyr-845–Glu-931, Ser-1017–Met-1061, Glu-1141–Lys-1241, Glu-1319–Leu-1378, Phe-1392–Val-1445, and Lys-1517–Pro-1607. Composition is skewed to polar residues over residues Pro-81–Val-93 and Pro-179–Gln-191. Over residues Val-195–Pro-205 the composition is skewed to low complexity. Residues Lys-206 to Thr-218 show a composition bias toward basic residues. Positions Ser-327–Lys-341 are enriched in low complexity. Polar residues-rich tracts occupy residues Val-349–Pro-371 and Pro-379–Gln-425. Over residues Asn-585–Tyr-594 the composition is skewed to low complexity. Residues Glu-858–Glu-871 are compositionally biased toward acidic residues. 2 stretches are compositionally biased toward basic and acidic residues: residues Pro-872–Arg-886 and Tyr-907–Trp-917. Composition is skewed to low complexity over residues Pro-1333–Val-1354, Val-1395–Lys-1419, and Leu-1584–Leu-1601.

Expressed in gonad distal tip cells and gonad sheath cells.

The protein resides in the nucleus. It is found in the cytoplasm. Functionally, during gonad development, involved in distal tip cell (DTC) migration from the dorsal side of the hermaphrodite body to the midbody which allows for the formation of gonad arms. Role in gonad DTC migration may be in association with integrin related proteins ina-1 and mig-15. This chain is Abnormal cell migration protein 38, found in Caenorhabditis elegans.